The primary structure comprises 137 residues: Diacylglycerol kinase (137 aa).

Glutamate 42 lines the a divalent metal cation pocket. 2 helical membrane passes run 49–67 (LIAFAAAMIAFIIVGATFF) and 73–89 (AILFLLMMAFEAINTAI). Glutamate 83 serves as the catalytic Proton acceptor. Glutamate 90 lines the a divalent metal cation pocket. A helical transmembrane segment spans residues 112–132 (SFACLCLIVANGVYAAYVVIF).

This sequence belongs to the bacterial diacylglycerol kinase family. It depends on Mg(2+) as a cofactor.

It localises to the cell inner membrane. It catalyses the reaction a 1,2-diacyl-sn-glycerol + ATP = a 1,2-diacyl-sn-glycero-3-phosphate + ADP + H(+). Functionally, catalyzes the ATP-dependent phosphorylation of sn-l,2-diacylglycerol (DAG) to phosphatidic acid. Involved in the recycling of diacylglycerol produced as a by-product during membrane-derived oligosaccharide (MDO) biosynthesis. The protein is Diacylglycerol kinase (dgkA) of Sinorhizobium sp.